We begin with the raw amino-acid sequence, 118 residues long: Large ribosomal subunit protein bL20 (118 aa).

The protein belongs to the bacterial ribosomal protein bL20 family.

Binds directly to 23S ribosomal RNA and is necessary for the in vitro assembly process of the 50S ribosomal subunit. It is not involved in the protein synthesizing functions of that subunit. In Erwinia tasmaniensis (strain DSM 17950 / CFBP 7177 / CIP 109463 / NCPPB 4357 / Et1/99), this protein is Large ribosomal subunit protein bL20.